A 287-amino-acid polypeptide reads, in one-letter code: Light-independent protochlorophyllide reductase iron-sulfur ATP-binding protein (287 aa).

ATP-binding positions include 10–15 (GIGKST) and Lys39. A Mg(2+)-binding site is contributed by Ser14. Residues Cys95 and Cys129 each contribute to the [4Fe-4S] cluster site. 180–181 (NR) lines the ATP pocket.

Belongs to the NifH/BchL/ChlL family. Homodimer. Protochlorophyllide reductase is composed of three subunits; ChlL, ChlN and ChlB. It depends on [4Fe-4S] cluster as a cofactor.

It is found in the plastid. The protein resides in the chloroplast. The catalysed reaction is chlorophyllide a + oxidized 2[4Fe-4S]-[ferredoxin] + 2 ADP + 2 phosphate = protochlorophyllide a + reduced 2[4Fe-4S]-[ferredoxin] + 2 ATP + 2 H2O. The protein operates within porphyrin-containing compound metabolism; chlorophyll biosynthesis (light-independent). Component of the dark-operative protochlorophyllide reductase (DPOR) that uses Mg-ATP and reduced ferredoxin to reduce ring D of protochlorophyllide (Pchlide) to form chlorophyllide a (Chlide). This reaction is light-independent. The L component serves as a unique electron donor to the NB-component of the complex, and binds Mg-ATP. This is Light-independent protochlorophyllide reductase iron-sulfur ATP-binding protein from Nephroselmis olivacea (Green alga).